Consider the following 194-residue polypeptide: Ras-related protein Rab-22A (194 aa).

12–20 is a binding site for GTP; the sequence is GDTGVGKSS. Residues 34 to 42 carry the Effector region motif; the sequence is INPTIGASF. Residues 60–64, 118–121, and 148–150 each bind GTP; these read DTAGQ, NKCD, and SAK. Residues 170 to 194 are disordered; the sequence is DANPPSGGKGFKLRRQPSEPQRSCC. Residues Cys193 and Cys194 are each lipidated (S-geranylgeranyl cysteine).

It belongs to the small GTPase superfamily. Rab family. As to quaternary structure, interacts directly with ZFYVE20. Interacts (in its GTP-bound form) with RINL and RABGEF1. Binds EEA1.

It localises to the endosome membrane. The protein resides in the cell membrane. The protein localises to the early endosome. It is found in the late endosome. Its subcellular location is the cell projection. It localises to the ruffle. The protein resides in the cytoplasmic vesicle. The protein localises to the phagosome. It is found in the phagosome membrane. Plays a role in endocytosis and intracellular protein transport. Mediates trafficking of TF from early endosomes to recycling endosomes. Required for NGF-mediated endocytosis of NTRK1, and subsequent neurite outgrowth. Binds GTP and GDP and has low GTPase activity. Alternates between a GTP-bound active form and a GDP-bound inactive form. The polypeptide is Ras-related protein Rab-22A (RAB22A) (Canis lupus familiaris (Dog)).